The chain runs to 166 residues: MKCIKCGNMEDKVIDSRPIKEGKSIRRRRECLRCGYRFTTYEEVQEIELFVKKRNGSIEQFDRNKLMIGIQKALEKRPITQSQIEDFVDQIIEECSAEKSPIIPSFVIGTKVMNKLKTIDEVAFIRFASVYCKFHDAKDFMNVISELKMNEGPSKSVPMLLQASSK.

The segment at cysteine 3 to cysteine 34 is a zinc-finger region. Residues leucine 49–aspartate 139 form the ATP-cone domain.

Belongs to the NrdR family. Zn(2+) serves as cofactor.

Its function is as follows. Negatively regulates transcription of bacterial ribonucleotide reductase nrd genes and operons by binding to NrdR-boxes. The sequence is that of Transcriptional repressor NrdR from Methylacidiphilum infernorum (isolate V4) (Methylokorus infernorum (strain V4)).